Here is a 261-residue protein sequence, read N- to C-terminus: Small ribosomal subunit protein eS1B (261 aa).

The segment covering 1-18 (MTLGKNKRISKGGKRGKK) has biased composition (basic residues). The segment at 1 to 23 (MTLGKNKRISKGGKRGKKKAQET) is disordered.

It belongs to the eukaryotic ribosomal protein eS1 family. Component of the small ribosomal subunit. Mature ribosomes consist of a small (40S) and a large (60S) subunit. The 40S subunit contains about 33 different proteins and 1 molecule of RNA (18S). The 60S subunit contains about 49 different proteins and 3 molecules of RNA (25S, 5.8S and 5S).

It localises to the cytoplasm. The protein is Small ribosomal subunit protein eS1B of Trypanosoma cruzi (strain CL Brener).